A 192-amino-acid polypeptide reads, in one-letter code: Adenylate kinase (192 aa).

An ATP-binding site is contributed by 10 to 18; it reads GVPGVGGTT.

Belongs to the archaeal adenylate kinase family. In terms of assembly, monomer.

It is found in the cytoplasm. It carries out the reaction AMP + ATP = 2 ADP. In Methanotorris igneus (Methanococcus igneus), this protein is Adenylate kinase (adkA).